Reading from the N-terminus, the 397-residue chain is Elongation factor Tu-1 (397 aa).

One can recognise a tr-type G domain in the interval 10–206 (KPHVNIGTIG…AVDENIPEPE (197 aa)). The segment at 19–26 (GHIDHGKT) is G1. A GTP-binding site is contributed by 19–26 (GHIDHGKT). Threonine 26 contacts Mg(2+). The interval 62 to 66 (GITIS) is G2. Positions 83 to 86 (DCPG) are G3. GTP contacts are provided by residues 83–87 (DCPGH) and 138–141 (NKAD). A G4 region spans residues 138 to 141 (NKAD). Residues 176–178 (SAL) are G5. Threonine 386 is modified (phosphothreonine).

It belongs to the TRAFAC class translation factor GTPase superfamily. Classic translation factor GTPase family. EF-Tu/EF-1A subfamily. Monomer. Phosphorylated on threonine and serine.

It localises to the cytoplasm. It carries out the reaction GTP + H2O = GDP + phosphate + H(+). GTP hydrolase that promotes the GTP-dependent binding of aminoacyl-tRNA to the A-site of ribosomes during protein biosynthesis. The polypeptide is Elongation factor Tu-1 (Streptomyces collinus).